Reading from the N-terminus, the 358-residue chain is WD repeat-containing protein 53 (358 aa).

WD repeat units lie at residues 8–47 (GHSS…GHMQ), 92–131 (VNEE…VTRS), 134–174 (RHSN…PVWI), 195–234 (LNPA…CERE), and 239–278 (GHTL…EKLQ). The interval 288–309 (KKAKRAACPTQGGNSRAPGAED) is disordered.

Belongs to the WD repeat WDR53 family.

The protein is WD repeat-containing protein 53 (Wdr53) of Mus musculus (Mouse).